The chain runs to 291 residues: 4-hydroxy-tetrahydrodipicolinate synthase (291 aa).

T44 is a binding site for pyruvate. Y132 acts as the Proton donor/acceptor in catalysis. The Schiff-base intermediate with substrate role is filled by K160. I202 is a binding site for pyruvate.

This sequence belongs to the DapA family. In terms of assembly, homotetramer; dimer of dimers.

The protein resides in the cytoplasm. It carries out the reaction L-aspartate 4-semialdehyde + pyruvate = (2S,4S)-4-hydroxy-2,3,4,5-tetrahydrodipicolinate + H2O + H(+). Its pathway is amino-acid biosynthesis; L-lysine biosynthesis via DAP pathway; (S)-tetrahydrodipicolinate from L-aspartate: step 3/4. Catalyzes the condensation of (S)-aspartate-beta-semialdehyde [(S)-ASA] and pyruvate to 4-hydroxy-tetrahydrodipicolinate (HTPA). This Roseobacter denitrificans (strain ATCC 33942 / OCh 114) (Erythrobacter sp. (strain OCh 114)) protein is 4-hydroxy-tetrahydrodipicolinate synthase.